The following is a 216-amino-acid chain: GTPase IMAP family member GIMD1 (216 aa).

One can recognise an AIG1-type G domain in the interval 5–216 (KMTINLALFG…ENCYQVLTFK (212 aa)). GTP contacts are provided by residues 14-22 (GMTQSGKSS), serine 35, and 147-149 (HAE).

It belongs to the TRAFAC class TrmE-Era-EngA-EngB-Septin-like GTPase superfamily. AIG1/Toc34/Toc159-like paraseptin GTPase family. IAN subfamily.

This is GTPase IMAP family member GIMD1 (GIMD1) from Bos taurus (Bovine).